The following is a 425-amino-acid chain: cAMP/cGMP-dependent 3',5'-cAMP/cGMP phosphodiesterase 7 (425 aa).

Positions 1-17 (MKYLILILIFFIEINNG) are cleaved as a signal peptide.

It belongs to the cyclic nucleotide phosphodiesterase class-II family.

The protein localises to the secreted. The protein resides in the extracellular space. It localises to the cell surface. The enzyme catalyses 3',5'-cyclic AMP + H2O = AMP + H(+). The catalysed reaction is 3',5'-cyclic GMP + H2O = GMP + H(+). Inhibited by dithiotreitol (DTT). Its function is as follows. Phosphodiesterase with dual cAMP/cGMP specificity. However, displays a preference for cAMP over cGMP. Seems to regulate cAMP/cGMP concentration especially during cell aggregation. The polypeptide is cAMP/cGMP-dependent 3',5'-cAMP/cGMP phosphodiesterase 7 (pde7) (Dictyostelium discoideum (Social amoeba)).